Consider the following 459-residue polypeptide: Sperm microtubule associated protein 2-like (459 aa).

Positions 1–138 (MEEGDFSGSS…QEDGKDDLFP (138 aa)) are disordered. Over residues 21–30 (TTTTTETRTT) the composition is skewed to low complexity. Residues 47–63 (NGDEAEAVGEEGQEEDY) show a composition bias toward acidic residues. Residues 64 to 73 (EGSKTHKSHE) are compositionally biased toward basic and acidic residues. Residues 77–87 (SFRSHNSSDPP) are compositionally biased toward polar residues. 2 stretches are compositionally biased toward basic and acidic residues: residues 91-112 (KASD…KTSD) and 127-136 (ERQEDGKDDL). 8 THEG repeats span residues 172–190 (KKCF…PKKQ), 212–231 (AALK…PRLV), 258–277 (PALV…PNKF), 291–310 (TTRY…AKGT), 327–346 (STLS…PRIK), 367–386 (AALL…SKRV), 403–422 (AATH…PHTR), and 440–459 (SALK…PIVR).

The chain is Sperm microtubule associated protein 2-like from Mus musculus (Mouse).